A 223-amino-acid chain; its full sequence is Deoxyribose-phosphate aldolase (223 aa).

Asp92 acts as the Proton donor/acceptor in catalysis. The Schiff-base intermediate with acetaldehyde role is filled by Lys154. Residue Lys182 is the Proton donor/acceptor of the active site.

Belongs to the DeoC/FbaB aldolase family. DeoC type 1 subfamily.

It is found in the cytoplasm. It catalyses the reaction 2-deoxy-D-ribose 5-phosphate = D-glyceraldehyde 3-phosphate + acetaldehyde. Its pathway is carbohydrate degradation; 2-deoxy-D-ribose 1-phosphate degradation; D-glyceraldehyde 3-phosphate and acetaldehyde from 2-deoxy-alpha-D-ribose 1-phosphate: step 2/2. Its function is as follows. Catalyzes a reversible aldol reaction between acetaldehyde and D-glyceraldehyde 3-phosphate to generate 2-deoxy-D-ribose 5-phosphate. The protein is Deoxyribose-phosphate aldolase of Haemophilus influenzae (strain ATCC 51907 / DSM 11121 / KW20 / Rd).